The following is a 90-amino-acid chain: Probable Fe(2+)-trafficking protein (90 aa).

This sequence belongs to the Fe(2+)-trafficking protein family.

Could be a mediator in iron transactions between iron acquisition and iron-requiring processes, such as synthesis and/or repair of Fe-S clusters in biosynthetic enzymes. In Acidovorax ebreus (strain TPSY) (Diaphorobacter sp. (strain TPSY)), this protein is Probable Fe(2+)-trafficking protein.